The following is a 100-amino-acid chain: Small ribosomal subunit protein uS14c (100 aa).

Belongs to the universal ribosomal protein uS14 family. As to quaternary structure, part of the 30S ribosomal subunit.

It localises to the plastid. It is found in the chloroplast. Binds 16S rRNA, required for the assembly of 30S particles. The sequence is that of Small ribosomal subunit protein uS14c from Physcomitrium patens (Spreading-leaved earth moss).